We begin with the raw amino-acid sequence, 88 residues long: Small ribosomal subunit protein bS18A (88 aa).

It belongs to the bacterial ribosomal protein bS18 family. As to quaternary structure, part of the 30S ribosomal subunit. Forms a tight heterodimer with protein bS6.

Functionally, binds as a heterodimer with protein bS6 to the central domain of the 16S rRNA, where it helps stabilize the platform of the 30S subunit. The chain is Small ribosomal subunit protein bS18A from Roseiflexus sp. (strain RS-1).